The following is a 306-amino-acid chain: MPSKEKIVVIAGPTGVGKSASTLPLAREFGGEIISADAVSVYRCLDIGAAKPGMEDRRLVPHHMIDVVDPDEDFDANIYAAQARAIAQSLHESDKRVFVDGGTGFYIKALLYGLFTEGRSDPELRDSLRREAAQLGSHALHDRLKDLDPPSAKRIHPNDAYRITRALEICILTGKPASAQQAAHGFEESPYDVLFFCLHREREILYQRTDQRVDQMLAMGLEQEVRGLLENGYGPELKSMQSIGYRHMCQYITGALNYEDAVTLMKRDTRRLAKRQMTWFKAYPEIRWMAPDETEAMRREISLFLE.

Residue 12 to 19 participates in ATP binding; the sequence is GPTGVGKS. 14–19 is a substrate binding site; sequence TGVGKS.

It belongs to the IPP transferase family. In terms of assembly, monomer. It depends on Mg(2+) as a cofactor.

The enzyme catalyses adenosine(37) in tRNA + dimethylallyl diphosphate = N(6)-dimethylallyladenosine(37) in tRNA + diphosphate. Functionally, catalyzes the transfer of a dimethylallyl group onto the adenine at position 37 in tRNAs that read codons beginning with uridine, leading to the formation of N6-(dimethylallyl)adenosine (i(6)A). In Desulfatibacillum aliphaticivorans, this protein is tRNA dimethylallyltransferase.